The following is a 183-amino-acid chain: ATP synthase subunit b, chloroplastic (183 aa).

The chain crosses the membrane as a helical span at residues 27-49 (LATNPINLSVVLGVLIFFGKGVL).

Belongs to the ATPase B chain family. In terms of assembly, F-type ATPases have 2 components, F(1) - the catalytic core - and F(0) - the membrane proton channel. F(1) has five subunits: alpha(3), beta(3), gamma(1), delta(1), epsilon(1). F(0) has four main subunits: a(1), b(1), b'(1) and c(10-14). The alpha and beta chains form an alternating ring which encloses part of the gamma chain. F(1) is attached to F(0) by a central stalk formed by the gamma and epsilon chains, while a peripheral stalk is formed by the delta, b and b' chains.

The protein resides in the plastid. It is found in the chloroplast thylakoid membrane. Its function is as follows. F(1)F(0) ATP synthase produces ATP from ADP in the presence of a proton or sodium gradient. F-type ATPases consist of two structural domains, F(1) containing the extramembraneous catalytic core and F(0) containing the membrane proton channel, linked together by a central stalk and a peripheral stalk. During catalysis, ATP synthesis in the catalytic domain of F(1) is coupled via a rotary mechanism of the central stalk subunits to proton translocation. In terms of biological role, component of the F(0) channel, it forms part of the peripheral stalk, linking F(1) to F(0). This is ATP synthase subunit b, chloroplastic from Ranunculus macranthus (Large buttercup).